The sequence spans 259 residues: Cobalt transport protein CbiM (259 aa).

The signal sequence occupies residues 1–25 (MFRRTTWLTLYLLLAMAALARPAFA). Helical transmembrane passes span 31-51 (GFLP…FWIW), 68-88 (MLLG…LPSV), 100-120 (LGAV…VLLF), 132-152 (TLGA…YGLY), 160-180 (GSMP…TYVT), and 206-226 (IFAV…VIVF).

Belongs to the CbiM family. As to quaternary structure, forms an energy-coupling factor (ECF) transporter complex composed of an ATP-binding protein (A component, CbiO), a transmembrane protein (T component, CbiQ) and 2 possible substrate-capture proteins (S components, CbiM and CbiN) of unknown stoichimetry.

Its subcellular location is the cell membrane. It functions in the pathway cofactor biosynthesis; adenosylcobalamin biosynthesis. Part of the energy-coupling factor (ECF) transporter complex CbiMNOQ involved in cobalt import. This Moorella thermoacetica (strain ATCC 39073 / JCM 9320) protein is Cobalt transport protein CbiM.